A 455-amino-acid polypeptide reads, in one-letter code: Epoxide hydrolase 1 (455 aa).

Residues 1–21 (MLLELLLASVLGFVIYWFVSG) traverse the membrane as a helical; Signal-anchor for type III membrane protein segment. Residues 22–455 (DKEESLPLED…CKFVGLVERQ (434 aa)) lie on the Cytoplasmic side of the membrane. D226 serves as the catalytic Nucleophile. Residue R295 is modified to Dimethylated arginine. The active-site Proton donor is Y374. H431 (proton acceptor) is an active-site residue.

This sequence belongs to the peptidase S33 family.

The protein resides in the microsome membrane. Its subcellular location is the endoplasmic reticulum membrane. It catalyses the reaction cis-stilbene oxide + H2O = (1R,2R)-hydrobenzoin. The catalysed reaction is 1-(4-methoxyphenyl)-N-methyl-N-[(3-methyloxetan-3-yl)methyl]methanamine + H2O = 2-{[(4-methoxybenzyl)(methyl)amino]methyl}-2-methylpropane-1,3-diol. It carries out the reaction 8,9-epoxy-(5Z,11Z,14Z)-eicosatrienoate + H2O = 8,9-dihydroxy-(5Z,11Z,14Z)-eicosatrienoate. The enzyme catalyses 11,12-epoxy-(5Z,8Z,14Z)-eicosatrienoate + H2O = 11,12-dihydroxy-(5Z,8Z,14Z)-eicosatrienoate. It catalyses the reaction 2-(5Z,8Z,11Z,14Z-eicosatetraenoyl)-glycerol + H2O = glycerol + (5Z,8Z,11Z,14Z)-eicosatetraenoate + H(+). Its activity is regulated as follows. Inhibited by 10-hydroxystearamide and methoxy-arachidonyl fluorophosphate. In terms of biological role, biotransformation enzyme that catalyzes the hydrolysis of arene and aliphatic epoxides to less reactive and more water soluble dihydrodiols by the trans addition of water. May play a role in the metabolism of endogenous lipids such as epoxide-containing fatty acids. Metabolizes the abundant endocannabinoid 2-arachidonoylglycerol (2-AG) to free arachidonic acid (AA) and glycerol. Binds 20(S)-hydroxycholesterol (20(S)-OHC). The polypeptide is Epoxide hydrolase 1 (EPHX1) (Oryctolagus cuniculus (Rabbit)).